We begin with the raw amino-acid sequence, 246 residues long: Probable transcriptional regulatory protein HD_0596 (246 aa).

Belongs to the TACO1 family.

Its subcellular location is the cytoplasm. The protein is Probable transcriptional regulatory protein HD_0596 of Haemophilus ducreyi (strain 35000HP / ATCC 700724).